A 132-amino-acid polypeptide reads, in one-letter code: Myelin P2 protein (132 aa).

Position 2 is an N-acetylserine (Ser2). Arg107 is a (9Z)-octadecenoate binding site. Position 107 (Arg107) interacts with hexadecanoate. Residues Cys118 and Cys125 are joined by a disulfide bond. 127–129 serves as a coordination point for (9Z)-octadecenoate; it reads RIY. Position 127–129 (127–129) interacts with hexadecanoate; it reads RIY.

This sequence belongs to the calycin superfamily. Fatty-acid binding protein (FABP) family. As to quaternary structure, monomer.

It is found in the cytoplasm. May play a role in lipid transport protein in Schwann cells. May bind cholesterol. In Bos taurus (Bovine), this protein is Myelin P2 protein (PMP2).